Here is a 116-residue protein sequence, read N- to C-terminus: Large ribosomal subunit protein bL17 (116 aa).

It belongs to the bacterial ribosomal protein bL17 family. In terms of assembly, part of the 50S ribosomal subunit. Contacts protein L32.

This chain is Large ribosomal subunit protein bL17, found in Synechococcus sp. (strain CC9902).